The sequence spans 144 residues: Large ribosomal subunit protein uL13 (144 aa).

The protein belongs to the universal ribosomal protein uL13 family. Part of the 50S ribosomal subunit.

Functionally, this protein is one of the early assembly proteins of the 50S ribosomal subunit, although it is not seen to bind rRNA by itself. It is important during the early stages of 50S assembly. The polypeptide is Large ribosomal subunit protein uL13 (Pelotomaculum thermopropionicum (strain DSM 13744 / JCM 10971 / SI)).